A 504-amino-acid chain; its full sequence is 2,3-bisphosphoglycerate-independent phosphoglycerate mutase (504 aa).

Residues Asp11 and Ser61 each coordinate Mn(2+). Residue Ser61 is the Phosphoserine intermediate of the active site. Residues His122, 152–153 (RD), Arg183, Arg189, 255–258 (RNDR), and Lys329 each bind substrate. Positions 396, 400, 437, 438, and 455 each coordinate Mn(2+).

This sequence belongs to the BPG-independent phosphoglycerate mutase family. As to quaternary structure, monomer. Requires Mn(2+) as cofactor.

The enzyme catalyses (2R)-2-phosphoglycerate = (2R)-3-phosphoglycerate. Its pathway is carbohydrate degradation; glycolysis; pyruvate from D-glyceraldehyde 3-phosphate: step 3/5. Its function is as follows. Catalyzes the interconversion of 2-phosphoglycerate and 3-phosphoglycerate. The protein is 2,3-bisphosphoglycerate-independent phosphoglycerate mutase of Bacteroides fragilis (strain ATCC 25285 / DSM 2151 / CCUG 4856 / JCM 11019 / LMG 10263 / NCTC 9343 / Onslow / VPI 2553 / EN-2).